The chain runs to 103 residues: Large ribosomal subunit protein uL24 (103 aa).

Belongs to the universal ribosomal protein uL24 family. In terms of assembly, part of the 50S ribosomal subunit.

Functionally, one of two assembly initiator proteins, it binds directly to the 5'-end of the 23S rRNA, where it nucleates assembly of the 50S subunit. In terms of biological role, one of the proteins that surrounds the polypeptide exit tunnel on the outside of the subunit. This Oceanobacillus iheyensis (strain DSM 14371 / CIP 107618 / JCM 11309 / KCTC 3954 / HTE831) protein is Large ribosomal subunit protein uL24.